The primary structure comprises 291 residues: Pantothenate synthetase (291 aa).

30–37 (MGYLHAGH) contributes to the ATP binding site. Residue His-37 is the Proton donor of the active site. (R)-pantoate is bound at residue Gln-61. Gln-61 provides a ligand contact to beta-alanine. 147–150 (GEKD) lines the ATP pocket. Gln-153 is a binding site for (R)-pantoate. ATP is bound by residues Val-176 and 184–187 (LSSR).

It belongs to the pantothenate synthetase family. As to quaternary structure, homodimer.

The protein localises to the cytoplasm. It catalyses the reaction (R)-pantoate + beta-alanine + ATP = (R)-pantothenate + AMP + diphosphate + H(+). Its pathway is cofactor biosynthesis; (R)-pantothenate biosynthesis; (R)-pantothenate from (R)-pantoate and beta-alanine: step 1/1. Catalyzes the condensation of pantoate with beta-alanine in an ATP-dependent reaction via a pantoyl-adenylate intermediate. The chain is Pantothenate synthetase from Rhizobium rhizogenes (strain K84 / ATCC BAA-868) (Agrobacterium radiobacter).